The chain runs to 92 residues: SPbeta prophage-derived uncharacterized protein YoqM (92 aa).

The signal sequence occupies residues 1-25 (MKLRKVLTGSVLSLGLLVSASPAFA).

The sequence is that of SPbeta prophage-derived uncharacterized protein YoqM (yoqM) from Bacillus subtilis (strain 168).